A 147-amino-acid chain; its full sequence is Nucleoside diphosphate kinase (147 aa).

6 residues coordinate ATP: K11, F59, R87, T93, R104, and N114. The Pros-phosphohistidine intermediate role is filled by H117.

This sequence belongs to the NDK family. In terms of assembly, homotetramer. Requires Mg(2+) as cofactor.

Its subcellular location is the cytoplasm. The enzyme catalyses a 2'-deoxyribonucleoside 5'-diphosphate + ATP = a 2'-deoxyribonucleoside 5'-triphosphate + ADP. It catalyses the reaction a ribonucleoside 5'-diphosphate + ATP = a ribonucleoside 5'-triphosphate + ADP. Major role in the synthesis of nucleoside triphosphates other than ATP. The ATP gamma phosphate is transferred to the NDP beta phosphate via a ping-pong mechanism, using a phosphorylated active-site intermediate. In Anaeromyxobacter dehalogenans (strain 2CP-C), this protein is Nucleoside diphosphate kinase.